Here is a 396-residue protein sequence, read N- to C-terminus: MSGPQQISILGATGSIGLSTLDVVARHPALYQVFALTGFSRLDELLALCIRHTPQYAVVPDQVVARKLQDDLAAAGLDTRVLVGEGGLCEVAADPRVDAVMAAIVGAAGLRPTLAAVEAGKKVLLANKEALVMSGALFMQAVRQNGAVLLPIDSEHNAIFQCLPGDFARGLGAVGVRRIMLTASGGPFRETPLEQLHNVTPEQACAHPVWSMGRKISVDSATMMNKGLELIEACWLFDARPDQVEVVIHPQSVIHSLVDYVDGSVLAQLGNPDMRTPIANALAWPARVDSGVAPLDLFRIGQLDFQAPDEERFPCLRLARQAAEAGGSAPAMLNAANEVAVAAFLDGRIRYLEIAGIIEEVLDHEPVTAVEGLEAVFAADAKARLLAGQWFERHGR.

Thr13, Gly14, Ser15, Ile16, and Asn127 together coordinate NADPH. Lys128 provides a ligand contact to 1-deoxy-D-xylulose 5-phosphate. Glu129 contributes to the NADPH binding site. Asp153 contacts Mn(2+). Residues Ser154, Glu155, Ser184, and His207 each coordinate 1-deoxy-D-xylulose 5-phosphate. Glu155 contributes to the Mn(2+) binding site. Position 213 (Gly213) interacts with NADPH. The 1-deoxy-D-xylulose 5-phosphate site is built by Ser220, Asn225, Lys226, and Glu229. Residue Glu229 participates in Mn(2+) binding.

Belongs to the DXR family. Mg(2+) serves as cofactor. It depends on Mn(2+) as a cofactor.

The catalysed reaction is 2-C-methyl-D-erythritol 4-phosphate + NADP(+) = 1-deoxy-D-xylulose 5-phosphate + NADPH + H(+). It participates in isoprenoid biosynthesis; isopentenyl diphosphate biosynthesis via DXP pathway; isopentenyl diphosphate from 1-deoxy-D-xylulose 5-phosphate: step 1/6. In terms of biological role, catalyzes the NADPH-dependent rearrangement and reduction of 1-deoxy-D-xylulose-5-phosphate (DXP) to 2-C-methyl-D-erythritol 4-phosphate (MEP). The protein is 1-deoxy-D-xylulose 5-phosphate reductoisomerase of Pseudomonas syringae pv. syringae (strain B728a).